The following is an 845-amino-acid chain: Protein SEY1 (845 aa).

Positions 1–29 (MELNVDSAKQLLAEHEQELQSAHDAHSIL) form a coiled coil. Residues 1–749 (MELNVDSAKQ…KRATVSSIAQ (749 aa)) lie on the Cytoplasmic side of the membrane. The GB1/RHD3-type G domain occupies 112 to 334 (GFGYDLCAVL…DPNFVFKTEY (223 aa)). Position 122-129 (122-129 (GSQSTGKS)) interacts with GTP. The chain crosses the membrane as a helical span at residues 750–770 (VPLWMYGVMLVLGWNELMAIL). The Lumenal portion of the chain corresponds to 771–773 (SSP). Residues 774–794 (VYFAFLLVLIASAYIVWRLNL) traverse the membrane as a helical segment. Residues 795-845 (SGPLISVLRAVANEVHRLADAQLRTHFSQPLREPRPPAESRPAEQIELEPN) lie on the Cytoplasmic side of the membrane. The disordered stretch occupies residues 823-845 (QPLREPRPPAESRPAEQIELEPN). Over residues 826–838 (REPRPPAESRPAE) the composition is skewed to basic and acidic residues.

Belongs to the TRAFAC class dynamin-like GTPase superfamily. GB1/RHD3 GTPase family. RHD3 subfamily.

The protein resides in the endoplasmic reticulum membrane. In terms of biological role, cooperates with the reticulon proteins and tubule-shaping DP1 family proteins to generate and maintain the structure of the tubular endoplasmic reticulum network. Has GTPase activity, which is required for its function in ER organization. In Mycosarcoma maydis (Corn smut fungus), this protein is Protein SEY1.